The following is a 344-amino-acid chain: MIEINRVNKIFYQGAKEINALKDINLHIAQGTIFGVIGSSGAGKSTLIRCVNMLERPTNGEVVVDGVDLTKLSSSELSKARRNIGMIFQHFNLLASRTVFDNVALPLELAGKSKHDIQKKVTELLDLVGLADKHHTYPANLSGGQKQRVAIARALSTDPKVLLCDEATSALDPATTKSILELIKDLNRKLSITILIITHEMEVVKNICHEVAIIGGGELVEKGAVSDIFAHPKTALAQEFIRATLDLSIPEDFKARLKDTYVEGSYPLIRLEFTGSTVDAPVISQISREFDIDISILSSDIDYAGGVKFGLMLAEVFGNQESTQKAIEFLRNHHVKVEVLGYVV.

In terms of domain architecture, ABC transporter spans 2–241 (IEINRVNKIF…PKTALAQEFI (240 aa)). Residue 38-45 (GSSGAGKS) coordinates ATP.

Belongs to the ABC transporter superfamily. Methionine importer (TC 3.A.1.24) family. The complex is composed of two ATP-binding proteins (MetN), two transmembrane proteins (MetI) and a solute-binding protein (MetQ).

The protein localises to the cell inner membrane. It catalyses the reaction L-methionine(out) + ATP + H2O = L-methionine(in) + ADP + phosphate + H(+). It carries out the reaction D-methionine(out) + ATP + H2O = D-methionine(in) + ADP + phosphate + H(+). Part of the ABC transporter complex MetNIQ involved in methionine import. Responsible for energy coupling to the transport system. The protein is Methionine import ATP-binding protein MetN of Aliivibrio fischeri (strain ATCC 700601 / ES114) (Vibrio fischeri).